The sequence spans 1190 residues: Plakophilin-4 (1190 aa).

The tract at residues 1-32 (MPAPEQGSLVEEGQPQTHQEAVSTGPGMEPET) is disordered. A coiled-coil region spans residues 36-63 (TILASVKEQELQFQRLTRELEVERQIVA). The disordered stretch occupies residues 73–347 (AESPSIASTS…KRSGMTAVPQ (275 aa)). Ser-75 is modified (phosphoserine). The segment covering 77-86 (SIASTSSTEK) has biased composition (polar residues). Position 84 is a phosphothreonine (Thr-84). Phosphoserine occurs at positions 106, 132, 136, and 139. 3 stretches are compositionally biased toward polar residues: residues 138–156 (GSLGNSRSSTQMNSYSDSG), 163–203 (FHNS…QPSV), and 213–229 (SVPSRAQSPSYVTSTGV). Phosphoserine is present on residues Ser-220, Ser-230, and Ser-235. Over residues 230 to 241 (SPSRGSLRTSLG) the composition is skewed to low complexity. Residues 247–266 (PSVTDSRPLNPSAYSSSTLP) show a composition bias toward polar residues. Arg-253 and Arg-269 each carry omega-N-methylarginine. 5 positions are modified to phosphoserine: Ser-272, Ser-280, Ser-313, Ser-326, and Ser-336. The segment covering 289–323 (SVTSRQTSNPNGPVPQYQTTTRVGSPLTLTDAQTR) has biased composition (polar residues). Positions 324–337 (VASPSQGQVGSSSP) are enriched in low complexity. Tyr-371 is modified (phosphotyrosine). Phosphoserine is present on residues Ser-391, Ser-402, and Ser-405. Thr-411 carries the phosphothreonine modification. Tyr-414 is subject to Phosphotyrosine. Phosphoserine occurs at positions 421, 426, and 437. Residue Tyr-477 is modified to Phosphotyrosine. Ser-509, Ser-511, and Ser-514 each carry phosphoserine. 3 ARM repeats span residues 517-556 (KDPREFAWRDPELPEVIHMLQHQFPSVQANAAAYLQHLCF), 559-598 (NKVKMEVYRLGGIKHLVDLLDHRVLEVQKNACGALRNLVF), and 603-643 (DENK…NLSS). A compositionally biased stretch (basic and acidic residues) spans 772-781 (GKESPSKDSE). Residues 772–809 (GKESPSKDSEPSCWGKKKKKKKRTPQEDQWDGVGPIPG) form a disordered region. Position 775 is a phosphoserine (Ser-775). One copy of the ARM 4 repeat lies at 861-900 (AYIRAAVRKEKGLPILVELLRMDNDRVVSSVATALRNMAL). Thr-1012 and Thr-1016 each carry phosphothreonine. A phosphoserine mark is found at Ser-1044, Ser-1090, Ser-1099, and Ser-1133.

Belongs to the beta-catenin family. Interacts (via the C-terminus) with FRMPD2 (via the PDZ 2 domain). Interacts with PDZD2. Interacts with RHOA; the interaction is detected at the midbody. Interacts with ECT2; the interaction is detected at the midbody. Interacts with CCDC85B.

It localises to the cell junction. The protein localises to the desmosome. The protein resides in the cytoplasm. It is found in the cytoskeleton. Its subcellular location is the spindle. It localises to the spindle pole. The protein localises to the midbody. The protein resides in the cell membrane. In terms of biological role, plays a role as a regulator of Rho activity during cytokinesis. May play a role in junctional plaques. The sequence is that of Plakophilin-4 (Pkp4) from Mus musculus (Mouse).